Reading from the N-terminus, the 347-residue chain is Ornithine carbamoyltransferase (347 aa).

Carbamoyl phosphate contacts are provided by residues 56 to 59 (STRT), Gln83, Arg107, and 134 to 137 (HPTQ). Residues Asn168, Asp232, and 236-237 (SM) contribute to the L-ornithine site. Residues 274–275 (CL) and Arg320 contribute to the carbamoyl phosphate site.

Belongs to the aspartate/ornithine carbamoyltransferase superfamily. OTCase family.

The protein localises to the cytoplasm. The catalysed reaction is carbamoyl phosphate + L-ornithine = L-citrulline + phosphate + H(+). Reversibly catalyzes the transfer of the carbamoyl group from carbamoyl phosphate (CP) to the N(epsilon) atom of ornithine (ORN) to produce L-citrulline. The protein is Ornithine carbamoyltransferase of Blochmanniella floridana.